An 879-amino-acid chain; its full sequence is Alanine--tRNA ligase (879 aa).

Residues His565, His569, Cys674, and His678 each contribute to the Zn(2+) site.

The protein belongs to the class-II aminoacyl-tRNA synthetase family. It depends on Zn(2+) as a cofactor.

The protein localises to the cytoplasm. It catalyses the reaction tRNA(Ala) + L-alanine + ATP = L-alanyl-tRNA(Ala) + AMP + diphosphate. Catalyzes the attachment of alanine to tRNA(Ala) in a two-step reaction: alanine is first activated by ATP to form Ala-AMP and then transferred to the acceptor end of tRNA(Ala). Also edits incorrectly charged Ser-tRNA(Ala) and Gly-tRNA(Ala) via its editing domain. This Gluconobacter oxydans (strain 621H) (Gluconobacter suboxydans) protein is Alanine--tRNA ligase.